The chain runs to 346 residues: Thiamine-phosphate synthase (346 aa).

The interval 1 to 125 is unknown; it reads MSVTPNPDQH…SKISAQIRYE (125 aa). Residues 126 to 346 are thiamine-phosphate synthase; the sequence is IYDLEVIILK…SKELLGKLKK (221 aa). 4-amino-2-methyl-5-(diphosphooxymethyl)pyrimidine contacts are provided by residues 177–181 and asparagine 209; that span reads QYRCK. Mg(2+) contacts are provided by aspartate 210 and aspartate 229. Serine 248 is a binding site for 4-amino-2-methyl-5-(diphosphooxymethyl)pyrimidine. Residue 274–276 coordinates 2-[(2R,5Z)-2-carboxy-4-methylthiazol-5(2H)-ylidene]ethyl phosphate; it reads TKS. Lysine 277 contributes to the 4-amino-2-methyl-5-(diphosphooxymethyl)pyrimidine binding site. Residue glycine 304 participates in 2-[(2R,5Z)-2-carboxy-4-methylthiazol-5(2H)-ylidene]ethyl phosphate binding.

Belongs to the thiamine-phosphate synthase family. Requires Mg(2+) as cofactor.

The catalysed reaction is 2-[(2R,5Z)-2-carboxy-4-methylthiazol-5(2H)-ylidene]ethyl phosphate + 4-amino-2-methyl-5-(diphosphooxymethyl)pyrimidine + 2 H(+) = thiamine phosphate + CO2 + diphosphate. It carries out the reaction 2-(2-carboxy-4-methylthiazol-5-yl)ethyl phosphate + 4-amino-2-methyl-5-(diphosphooxymethyl)pyrimidine + 2 H(+) = thiamine phosphate + CO2 + diphosphate. The enzyme catalyses 4-methyl-5-(2-phosphooxyethyl)-thiazole + 4-amino-2-methyl-5-(diphosphooxymethyl)pyrimidine + H(+) = thiamine phosphate + diphosphate. It participates in cofactor biosynthesis; thiamine diphosphate biosynthesis; thiamine phosphate from 4-amino-2-methyl-5-diphosphomethylpyrimidine and 4-methyl-5-(2-phosphoethyl)-thiazole: step 1/1. In terms of biological role, condenses 4-methyl-5-(beta-hydroxyethyl)thiazole monophosphate (THZ-P) and 2-methyl-4-amino-5-hydroxymethyl pyrimidine pyrophosphate (HMP-PP) to form thiamine monophosphate (TMP). The protein is Thiamine-phosphate synthase of Prochlorococcus marinus (strain SARG / CCMP1375 / SS120).